The sequence spans 219 residues: uncharacterized protein (219 aa).

Residues 1-15 (MLKLTTTSVTFHVLR) are Cytoplasmic-facing. Residues 16-36 (YFQLGLSVTNLLLASFAIITN) traverse the membrane as a helical segment. Residues 37–41 (YKVDR) lie on the Vacuolar side of the membrane. The chain crosses the membrane as a helical span at residues 42-62 (ILRLSLAVSIISSVYFGIVRF). L63 is a topological domain (cytoplasmic). Residues 64 to 84 (PVLLIFVMEIVQTVLWFTAFV) traverse the membrane as a helical segment. The Vacuolar portion of the chain corresponds to 85–116 (TLASKFGSMSCSSMPRGINFDYSGSCKIAKID). The helical transmembrane segment at 117 to 137 (ILPEAVLFILFLATTYASYIT) threads the bilayer. Residues 138–219 (VLSQAKENGS…VIDGSIEHSS (82 aa)) are Cytoplasmic-facing. The interval 176–219 (PLLDLEVQEDARTETESIEDSTDSEDNANIEQEKVIDGSIEHSS) is disordered. Residues 191 to 203 (ESIEDSTDSEDNA) are compositionally biased toward acidic residues. The span at 206 to 219 (EQEKVIDGSIEHSS) shows a compositional bias: basic and acidic residues.

The protein resides in the vacuole membrane. This is an uncharacterized protein from Saccharomyces cerevisiae (strain ATCC 204508 / S288c) (Baker's yeast).